We begin with the raw amino-acid sequence, 331 residues long: Protein C10 (331 aa).

Belongs to the poxviridae C4/C10 protein family.

This chain is Protein C10, found in Vaccinia virus (strain Copenhagen) (VACV).